The chain runs to 199 residues: Ribonuclease HII (199 aa).

The 190-residue stretch at 10 to 199 (RIEAGCDEAG…LLPEQLTLGF (190 aa)) folds into the RNase H type-2 domain. Residues Asp16, Glu17, and Asp108 each coordinate a divalent metal cation.

It belongs to the RNase HII family. The cofactor is Mn(2+). Mg(2+) is required as a cofactor.

Its subcellular location is the cytoplasm. The catalysed reaction is Endonucleolytic cleavage to 5'-phosphomonoester.. Endonuclease that specifically degrades the RNA of RNA-DNA hybrids. This Parabacteroides distasonis (strain ATCC 8503 / DSM 20701 / CIP 104284 / JCM 5825 / NCTC 11152) protein is Ribonuclease HII.